A 71-amino-acid polypeptide reads, in one-letter code: Palustrin-2AJ2 (71 aa).

The first 22 residues, 1–22 (MFTLKKPLLVLLFLGTVSLSLC), serve as a signal peptide directing secretion. Positions 23–40 (EQERAADDDEGEVIEEEV) are excised as a propeptide. A disulfide bond links cysteine 65 and cysteine 71.

Expressed by the skin glands.

Its subcellular location is the secreted. Functionally, displays broad-spectrum antibacterial activity against a range of Gram-positive and Gram-negative bacteria. Has low hemolytic activity, low cytotoxicity and low antioxidant activity. In Amolops jingdongensis (Chinese torrent frog), this protein is Palustrin-2AJ2.